We begin with the raw amino-acid sequence, 462 residues long: NEDD8-activating enzyme E1 catalytic subunit (462 aa).

Residues 52 to 69 (HPDFEASTESLQFLLDTC) form an interaction with ube2m N-terminus region. Residues 99–123 (DMDTIDVSNLNRQFLFRPKDVGRPK) and 147–170 (IQDLDETFYRQFHIVVCGLDSVIA) contribute to the ATP site. Interaction with ube2m N-terminus regions lie at residues 156–160 (RQFHI) and 191–216 (PSSIIPLIDGGTEGFKGNARVILPGM). An interaction with nedd8 region spans residues 226-228 (LYP). Cys236 (glycyl thioester intermediate) is an active-site residue. Interaction with nae1 stretches follow at residues 241–247 (MPRLPEH) and 291–294 (FNIT). Positions 330 to 337 (IATSAYVP) are interaction with ube2m N-terminus. Residues 351-356 (YTYTFE) are interaction with nedd8. Positions 367-462 (SQVPQDMQFT…TVLFKLKFIS (96 aa)) are interaction with ube2m core domain.

This sequence belongs to the ubiquitin-activating E1 family. UBA3 subfamily. Heterodimer of uba3 and nae1. Interacts with nedd8, ube2f and ube2m.

The catalysed reaction is ATP + [NEDD8 protein] + [E1 NEDD8-activating enzyme]-L-cysteine = AMP + diphosphate + [E1 NEDD8-activating enzyme]-S-[NEDD8 protein]-yl-L-cysteine.. It functions in the pathway protein modification; protein neddylation. In terms of biological role, catalytic subunit of the dimeric uba3-nae1 E1 enzyme. E1 activates nedd8 by first adenylating its C-terminal glycine residue with ATP, thereafter linking this residue to the side chain of the catalytic cysteine, yielding a nedd8-uba3 thioester and free AMP. E1 finally transfers nedd8 to the catalytic cysteine of ube2m. The sequence is that of NEDD8-activating enzyme E1 catalytic subunit (uba3) from Danio rerio (Zebrafish).